Consider the following 286-residue polypeptide: S-adenosylmethionine-dependent methyltransferase UmaA (286 aa).

Residues 32-33, 67-75, 93-98, and 122-123 contribute to the S-adenosyl-L-methionine site; these read YT, LLDIGCGWG, TLSRNQ, and WD. Cys268 is a catalytic residue.

This sequence belongs to the CFA/CMAS family.

It is found in the cytoplasm. In terms of biological role, methyltransferase that modifies short-chain fatty acids. In vitro, catalyzes the transfer of the methyl group from S-adenosyl-L-methionine (SAM) to the double bond of phospholipid-linked oleic acid to produce tuberculostearic acid (10-methylstearic-acid or TSA). In Mycobacterium tuberculosis (strain ATCC 25618 / H37Rv), this protein is S-adenosylmethionine-dependent methyltransferase UmaA.